The chain runs to 487 residues: ATP synthase subunit beta (487 aa).

164 to 171 (GGAGVGKT) provides a ligand contact to ATP.

Belongs to the ATPase alpha/beta chains family. F-type ATPases have 2 components, CF(1) - the catalytic core - and CF(0) - the membrane proton channel. CF(1) has five subunits: alpha(3), beta(3), gamma(1), delta(1), epsilon(1). CF(0) has four main subunits: a(1), b(1), b'(1) and c(9-12).

The protein resides in the cellular thylakoid membrane. It carries out the reaction ATP + H2O + 4 H(+)(in) = ADP + phosphate + 5 H(+)(out). Produces ATP from ADP in the presence of a proton gradient across the membrane. The catalytic sites are hosted primarily by the beta subunits. This Synechococcus sp. (strain WH7803) protein is ATP synthase subunit beta.